Consider the following 265-residue polypeptide: Aquaporin-5 (265 aa).

Topologically, residues 1 to 12 (MKKEVCSLAFLK) are cytoplasmic. Residues 13–33 (AVFAEFLATLIFVFFGLASAL) traverse the membrane as a helical segment. Over 34–39 (KWPSAL) the chain is Extracellular. The chain crosses the membrane as a helical span at residues 40-60 (PTILQIALAFGLAIGTLAQAL). Residues 61–65 (GPVSG) are Cytoplasmic-facing. The discontinuously helical intramembrane region spans 66–74 (GHINPAITL). The NPA 1 signature appears at 69-71 (NPA). Over 75–87 (ALLVGNQISLLRA) the chain is Cytoplasmic. Residues 88-108 (VFYVVAQLVGAIAGAGILYGL) form a helical membrane-spanning segment. The Extracellular portion of the chain corresponds to 109–126 (APGNARGNLAVNSLNNNT). The N-linked (GlcNAc...) asparagine glycan is linked to Asn-124. A helical membrane pass occupies residues 127-147 (TPGQAVVVEMILTFQLALCIF). Residues 148-158 (SSTDSRRTSPV) lie on the Cytoplasmic side of the membrane. Residues 159-179 (GSPALSIGLSVTLGHLVGIYF) traverse the membrane as a helical segment. Position 180 (Thr-180) is a topological domain, extracellular. The segment at residues 181 to 191 (GCSMNPARSFG) is an intramembrane region (discontinuously helical). Residues 185–187 (NPA) carry the NPA 2 motif. Residues 192-203 (PAVVMNRFSPSH) are Extracellular-facing. A helical membrane pass occupies residues 204–224 (WVFWVGPIVGAAVAAILYFYL). The Cytoplasmic segment spans residues 225–265 (LFPNSLSLSERVAVVKGTYESEEDWEEQREERKKTMELTAH).

Belongs to the MIP/aquaporin (TC 1.A.8) family. Homotetramer; each monomer provides an independent water pore. Interacts with TRPV4; the interaction is probably indirect and regulates TRPV4 activation by hypotonicity.

Its subcellular location is the apical cell membrane. The protein localises to the cell membrane. It localises to the cytoplasmic vesicle membrane. It carries out the reaction H2O(in) = H2O(out). Functionally, aquaporins form homotetrameric transmembrane channels, with each monomer independently mediating water transport across the plasma membrane along its osmotic gradient. Plays an important role in fluid secretion in salivary glands. Required for TRPV4 activation by hypotonicity. Together with TRPV4, controls regulatory volume decrease in salivary epithelial cells. Seems to play a redundant role in water transport in the eye, lung and in sweat glands. The sequence is that of Aquaporin-5 from Sus scrofa (Pig).